Reading from the N-terminus, the 652-residue chain is Carboxypeptidase S1 homolog A (652 aa).

The signal sequence occupies residues 1–19 (MRFAASIAVALPVIHAASA). The cysteines at positions 50 and 121 are disulfide-linked. Asparagine 77, asparagine 132, asparagine 161, asparagine 168, asparagine 184, and asparagine 202 each carry an N-linked (GlcNAc...) asparagine glycan. Serine 238 is a catalytic residue. Residues asparagine 260, asparagine 299, asparagine 347, and asparagine 410 are each glycosylated (N-linked (GlcNAc...) asparagine). Intrachain disulfides connect cysteine 325/cysteine 361 and cysteine 332/cysteine 354. Aspartate 458 is an active-site residue. Cysteine 461 provides a ligand contact to substrate. Residues asparagine 474, asparagine 492, and asparagine 505 are each glycosylated (N-linked (GlcNAc...) asparagine). Residue histidine 516 is part of the active site. Glutamate 517 contacts substrate. A disordered region spans residues 608-627 (AASKGNPPPTTTSSPTAAPT). Over residues 618–627 (TTSSPTAAPT) the composition is skewed to low complexity. Glycine 629 is lipidated: GPI-anchor amidated glycine. The propeptide at 630–652 (SAMLKAPVAMLAISALTVLAFFL) is removed in mature form.

It belongs to the peptidase S10 family.

The protein localises to the cell membrane. It carries out the reaction Preferential release of a C-terminal arginine or lysine residue.. Functionally, extracellular serine carboxypeptidase that contributes to pathogenicity. The chain is Carboxypeptidase S1 homolog A (SCPA) from Trichophyton rubrum (Athlete's foot fungus).